We begin with the raw amino-acid sequence, 63 residues long: Large ribosomal subunit protein bL35 (63 aa).

A compositionally biased stretch (basic residues) spans 1–43 (MKMRTHSGAKKRLKVLSSGKVKKKSTRMRHLNSHMSSKTKRQL). The disordered stretch occupies residues 1–45 (MKMRTHSGAKKRLKVLSSGKVKKKSTRMRHLNSHMSSKTKRQLGK).

This sequence belongs to the bacterial ribosomal protein bL35 family.

This Bdellovibrio bacteriovorus (strain ATCC 15356 / DSM 50701 / NCIMB 9529 / HD100) protein is Large ribosomal subunit protein bL35.